The sequence spans 516 residues: Probable serine/threonine-protein kinase DDB_G0293276 (516 aa).

The disordered stretch occupies residues 69–115 (SIEIDDENPYNTNNNNNSNNNNNNNNNNCNNSNNSNNNKNINSLDNI). A compositionally biased stretch (low complexity) spans 79-115 (NTNNNNNSNNNNNNNNNNCNNSNNSNNNKNINSLDNI). The Protein kinase domain maps to 232-479 (YKHVECIGKG…SKDIKNHPYF (248 aa)). ATP-binding positions include 238-246 (IGKGGYGVV) and lysine 261. Aspartate 350 acts as the Proton acceptor in catalysis.

The protein belongs to the protein kinase superfamily. AGC Ser/Thr protein kinase family.

The enzyme catalyses L-seryl-[protein] + ATP = O-phospho-L-seryl-[protein] + ADP + H(+). It carries out the reaction L-threonyl-[protein] + ATP = O-phospho-L-threonyl-[protein] + ADP + H(+). The polypeptide is Probable serine/threonine-protein kinase DDB_G0293276 (Dictyostelium discoideum (Social amoeba)).